The primary structure comprises 173 residues: KIGIFFSTSTGNTTEVADFIGKTLGAKADAPIDVDDVTDPQALKDYDLLFLGAPTWNTGADTERSGTSWDEFLYDKLPEVDMKDLPVAIFGLGDAEGYPDNFCDAIEEIHDCFAKQGAKPVGFSNPDDYDYEESKSVRDGKFLGLPLDMVNDQIPMEKRVAGWVEAVVSETGV.

The 167-residue stretch at I2 to V168 folds into the Flavodoxin-like domain.

This sequence belongs to the flavodoxin family. It depends on FMN as a cofactor.

Functionally, low-potential electron donor to a number of redox enzymes. This Chondrus crispus (Carrageen Irish moss) protein is Flavodoxin.